The primary structure comprises 619 residues: Kinesin light chain 4 (619 aa).

An N-acetylserine modification is found at S2. Residues 32–150 (GLESLHSEHQ…EEEKKHLEFL (119 aa)) adopt a coiled-coil conformation. Residues 55–88 (QQGGHEEGLVHEKARQLRRSMENIELGLSEAQVM) form a TPR 1 repeat. Positions 156–175 (YDEDGHSMEEKEGDASKDSL) are enriched in basic and acidic residues. Residues 156 to 200 (YDEDGHSMEEKEGDASKDSLDDLFPNEEEEDSSNDLSRGQGAAAA) form a disordered region. A Phosphoserine modification is found at S174. The span at 179–188 (FPNEEEEDSS) shows a compositional bias: acidic residues. TPR repeat units follow at residues 211-244 (LRTL…LERT), 253-286 (ATML…REST), 295-328 (AATL…REKV), 337-370 (AKQL…YERQ), and 379-412 (ARTK…AHVQ). The residue at position 460 (S460) is a Phosphoserine. One copy of the TPR 7 repeat lies at 464-497 (NTTLRNLGALYRRQGKLEAAETLEECALRSRKQG). Phosphoserine occurs at positions 565, 566, and 590. The disordered stretch occupies residues 571-619 (RKLQGTEPRPSSSNMKRAASLNYLNQPNAAPLQTSRGLSASTVDLSSSS). Residues 592-608 (NYLNQPNAAPLQTSRGL) are compositionally biased toward polar residues. Low complexity predominate over residues 609-619 (SASTVDLSSSS). A Phosphothreonine modification is found at T612.

The protein belongs to the kinesin light chain family. As to quaternary structure, oligomeric complex composed of two heavy chains and two light chains.

Its subcellular location is the cytoplasm. The protein resides in the cytoskeleton. In terms of biological role, kinesin is a microtubule-associated force-producing protein that may play a role in organelle transport. The light chain may function in coupling of cargo to the heavy chain or in the modulation of its ATPase activity. The polypeptide is Kinesin light chain 4 (Klc4) (Rattus norvegicus (Rat)).